The following is a 305-amino-acid chain: Homoserine kinase (305 aa).

90-100 (PLARGLGSSAS) lines the ATP pocket.

The protein belongs to the GHMP kinase family. Homoserine kinase subfamily.

It localises to the cytoplasm. The enzyme catalyses L-homoserine + ATP = O-phospho-L-homoserine + ADP + H(+). Its pathway is amino-acid biosynthesis; L-threonine biosynthesis; L-threonine from L-aspartate: step 4/5. Functionally, catalyzes the ATP-dependent phosphorylation of L-homoserine to L-homoserine phosphate. This is Homoserine kinase from Staphylococcus saprophyticus subsp. saprophyticus (strain ATCC 15305 / DSM 20229 / NCIMB 8711 / NCTC 7292 / S-41).